A 162-amino-acid polypeptide reads, in one-letter code: MTPRKPFWQTKTLAEMTVPEWESLCDGCGLCCLVRFEDEDTGEIIPTRVHCQLFDERLCRCKDYPNRKKTVPDCIKLTPYNIEDLEWMPPSCAYRRLHEGKDLPLWHPLVTGDPESTHKAGVSIRNQTVSELSFKDAEDAMDFVATDLMRDRGDDLYEPEEG.

Belongs to the UPF0260 family.

The sequence is that of UPF0260 protein CC_3276 from Caulobacter vibrioides (strain ATCC 19089 / CIP 103742 / CB 15) (Caulobacter crescentus).